We begin with the raw amino-acid sequence, 720 residues long: Putative glutamine--fructose-6-phosphate aminotransferase [isomerizing] (720 aa).

The Nucleophile; for GATase activity role is filled by C2. Residues 2–321 enclose the Glutamine amidotransferase type-2 domain; the sequence is CGIFGYCNFL…DNDIAHIYDG (320 aa). Residues 266 to 280 are compositionally biased toward polar residues; that stretch reads STTSTFNHGSSTETP. The interval 266-285 is disordered; that stretch reads STTSTFNHGSSTETPAENGL. SIS domains lie at 393–532 and 565–710; these read WLTE…DLVS and CDKK…VDLP.

The enzyme catalyses D-fructose 6-phosphate + L-glutamine = D-glucosamine 6-phosphate + L-glutamate. Its pathway is nucleotide-sugar biosynthesis; UDP-N-acetyl-alpha-D-glucosamine biosynthesis; alpha-D-glucosamine 6-phosphate from D-fructose 6-phosphate: step 1/1. Functionally, involved in amino sugar synthesis (formation of chitin, supplies the amino sugars of asparagine-linked oligosaccharides of glycoproteins). The sequence is that of Putative glutamine--fructose-6-phosphate aminotransferase [isomerizing] from Saccharomyces cerevisiae (strain RM11-1a) (Baker's yeast).